Here is a 389-residue protein sequence, read N- to C-terminus: Na(+)/H(+) antiporter NhaA (389 aa).

Helical transmembrane passes span 17–37 (ILLL…LAGL), 59–79 (LLLW…GLEV), 95–115 (SLPT…YLLF), 124–144 (AGWA…MALL), 154–174 (VFLL…IALF), 177–197 (TDLS…LVAL), 213–233 (LVLW…GVII), 261–281 (FLIL…NMSL), 287–307 (PVPV…VMLF), 328–348 (IAPV…IASL), and 363–383 (LGTL…LSKV).

This sequence belongs to the NhaA Na(+)/H(+) (TC 2.A.33) antiporter family.

Its subcellular location is the cell inner membrane. It carries out the reaction Na(+)(in) + 2 H(+)(out) = Na(+)(out) + 2 H(+)(in). Its function is as follows. Na(+)/H(+) antiporter that extrudes sodium in exchange for external protons. This is Na(+)/H(+) antiporter NhaA from Shewanella sp. (strain MR-4).